The chain runs to 131 residues: Insertion element IS1 protein InsB (131 aa).

It belongs to the transposase 27 family.

Absolutely required for transposition of IS1. The protein is Insertion element IS1 protein InsB (insB) of Shigella sonnei.